A 709-amino-acid chain; its full sequence is Caprin-1 (709 aa).

2 stretches are compositionally biased toward low complexity: residues 1–15 (MPSA…SKSS) and 22–43 (GSSG…QHPA). A disordered region spans residues 1-50 (MPSATSHSGSGSKSSGPPPPSGSSGSEAAAGAGAAAPASQHPATGTGAVQ). At proline 2 the chain carries N-acetylproline. N-acetylalanine is present on proline 2. Serine 10 bears the Phosphoserine mark. A coiled-coil region spans residues 60 to 94 (VIDKKLRNLEKKKGKLDDYQERMNKGERLNQDQLD). Serine 115 is modified (phosphoserine). The stretch at 125 to 153 (KTIKKTARREQLMREEAEQKRLKTVLELQ) forms a coiled coil. Omega-N-methylarginine is present on arginine 165. Residues 260–291 (EEAASAPAVEDQVPEAEPEPAEEYTEQSEVES) are disordered. The segment covering 271 to 291 (QVPEAEPEPAEEYTEQSEVES) has biased composition (acidic residues). A phosphoserine mark is found at serine 335 and serine 343. Positions 360–381 (QDLMAQMQGPYNFIQDSMLDFE) are G3BP1-binding. Disordered stretches follow at residues 417 to 446 (LAQP…TASQ), 475 to 499 (TDQT…GTSK), and 524 to 709 (APVP…QQVN). Polar residues predominate over residues 433-446 (PLVSSTSEGYTASQ). 2 stretches are compositionally biased toward low complexity: residues 477–491 (QTTA…SQPQ) and 537–570 (QQNQ…QTVV). The segment covering 577-605 (PDQSHQVTGNHQQPPQQNTGFPRSNQPYY) has biased composition (polar residues). Tyrosine 625 is modified (phosphotyrosine; by EPHA4). Omega-N-methylarginine is present on residues arginine 626 and arginine 633. Residues tyrosine 636 and tyrosine 639 each carry the phosphotyrosine; by EPHA4 modification. An Omega-N-methylarginine modification is found at arginine 640. The span at 642–657 (SFSNTPNSGYTQSQFS) shows a compositional bias: polar residues. 2 O-linked (GlcNAc) serine glycosylation sites follow: serine 644 and serine 649. Phosphotyrosine; by EPHA4 occurs at positions 651, 662, 665, and 670. Composition is skewed to low complexity over residues 676-686 (RGSGQSGPRGA) and 697-709 (NRGM…QQVN). Arginine 698 bears the Asymmetric dimethylarginine; alternate mark. Arginine 698 bears the Omega-N-methylarginine; alternate mark.

The protein belongs to the caprin family. May form homomultimers. Interacts with G3BP1; interaction is direct and promotes stress granule formation. Interacts with G3BP2; interaction is direct and promotes stress granule formation. Interacts with PQBP1. Interacts with DDX3X. Interacts (when phosphorylated by EPHA4) with FMR1; interaction with FMR1 promotes formation of a membraneless compartment. As to quaternary structure, (Microbial infection) Interacts with Zika virus capsid protein C; this interaction is probably linked to the inhibition of stress granules formation by the virus. In terms of assembly, (Microbial infection) Interacts with rotavirus A non-structural protein 5; this interaction probably plays a role in the sequestration of CAPRIN1 in viral factories. (Microbial infection) Interacts with Japanese encephalitis virus capsid protein C; this interaction is involved in the suppression of the integrated stress response by the virus. Post-translationally, tyrosine phosphorylation by EPHA4 promotes interaction with FMR1 and liquid-liquid phase separation (LLPS) for the formation of a membraneless compartment that concentrates mRNAs with associated regulatory factors. In terms of processing, O-glycosylated (O-GlcNAcylated), in a cell cycle-dependent manner. O-glycosylation by OGT inhibit ability to undergo liquid-liquid phase separation (LLPS). In terms of tissue distribution, ubiquitous.

The protein localises to the cytoplasm. It is found in the cytoplasmic ribonucleoprotein granule. The protein resides in the cytosol. Its subcellular location is the cell projection. It localises to the dendrite. The protein localises to the lamellipodium. With respect to regulation, ability to mediate liquid-liquid phase separation is regulated by ATP: moderate concentrations of ATP enhance phase separation, whereas high concentrations of ATP lead to inhibition of phase separation. In terms of biological role, mRNA-binding protein that acts as a regulator of mRNAs transport, translation and/or stability, and which is involved in neurogenesis, synaptic plasticity in neurons and cell proliferation and migration in multiple cell types. Plays an essential role in cytoplasmic stress granule formation. Acts as an mRNA regulator by mediating formation of some phase-separated membraneless compartment: undergoes liquid-liquid phase separation upon binding to target mRNAs, leading to assemble mRNAs into cytoplasmic ribonucleoprotein granules that concentrate mRNAs with associated regulatory factors. Undergoes liquid-liquid phase separation following phosphorylation and interaction with FMR1, promoting formation of cytoplasmic ribonucleoprotein granules that concentrate mRNAs with factors that inhibit translation and mediate deadenylation of target mRNAs. In these cytoplasmic ribonucleoprotein granules, CAPRIN1 mediates recruitment of CNOT7 deadenylase, leading to mRNA deadenylation and degradation. Binds directly and selectively to MYC and CCND2 mRNAs. In neuronal cells, directly binds to several mRNAs associated with RNA granules, including BDNF, CAMK2A, CREB1, MAP2, NTRK2 mRNAs, as well as to GRIN1 and KPNB1 mRNAs, but not to rRNAs. This Homo sapiens (Human) protein is Caprin-1.